Reading from the N-terminus, the 319-residue chain is Lipoyl synthase (319 aa).

Residues 5-31 (LDTISANPVRPRHPEKANRPDALSPPK) are disordered. Cys61, Cys66, Cys72, Cys87, Cys91, Cys94, and Ser300 together coordinate [4Fe-4S] cluster. In terms of domain architecture, Radical SAM core spans 73-289 (WDKKHATFMI…ETVAYTKGFL (217 aa)).

Belongs to the radical SAM superfamily. Lipoyl synthase family. [4Fe-4S] cluster serves as cofactor.

The protein resides in the cytoplasm. The enzyme catalyses [[Fe-S] cluster scaffold protein carrying a second [4Fe-4S](2+) cluster] + N(6)-octanoyl-L-lysyl-[protein] + 2 oxidized [2Fe-2S]-[ferredoxin] + 2 S-adenosyl-L-methionine + 4 H(+) = [[Fe-S] cluster scaffold protein] + N(6)-[(R)-dihydrolipoyl]-L-lysyl-[protein] + 4 Fe(3+) + 2 hydrogen sulfide + 2 5'-deoxyadenosine + 2 L-methionine + 2 reduced [2Fe-2S]-[ferredoxin]. The protein operates within protein modification; protein lipoylation via endogenous pathway; protein N(6)-(lipoyl)lysine from octanoyl-[acyl-carrier-protein]: step 2/2. Its function is as follows. Catalyzes the radical-mediated insertion of two sulfur atoms into the C-6 and C-8 positions of the octanoyl moiety bound to the lipoyl domains of lipoate-dependent enzymes, thereby converting the octanoylated domains into lipoylated derivatives. The chain is Lipoyl synthase from Nitrobacter winogradskyi (strain ATCC 25391 / DSM 10237 / CIP 104748 / NCIMB 11846 / Nb-255).